Consider the following 373-residue polypeptide: Structure-specific endonuclease subunit EME2 (373 aa).

The interval 24 to 52 is disordered; that stretch reads RPQTWEISDSDGEGVPAREVGTQAPSPAG. The tract at residues 47 to 260 is nuclease-like domain; forms the post-nick DNA binding interface and is involved in DNA recognition and bending; sequence APSPAGERRA…LPSKQHRDSQ (214 aa). The segment at 282–373 is helix-hairpin-helix (2HhH); forms the pre-nick DNA binding interface and is involved in DNA recognition and bending; that stretch reads GLRGVWWRQI…NPDLLLDLSS (92 aa).

The protein belongs to the EME1/MMS4 family. As to quaternary structure, part of the heterodimeric MUS81-EME2 complex; the complex forms specifically during the DNA replication phase of the cell cycle.

It is found in the nucleus. Non-catalytic subunit of the structure-specific, heterodimeric DNA endonuclease MUS81-EME2 which is involved in the maintenance of genome stability. In the complex, EME2 is required for DNA cleavage, participating in DNA recognition and bending. MUS81-EME2 cleaves 3'-flaps and nicked Holliday junctions, and exhibit limited endonuclease activity with 5' flaps and nicked double-stranded DNAs. MUS81-EME2 which is active during the replication of DNA is more specifically involved in replication fork processing. Replication forks frequently encounter obstacles to their passage, including DNA base lesions, DNA interstrand cross-links, difficult-to-replicate sequences, transcription bubbles, or tightly bound proteins. One mechanism for the restart of a stalled replication fork involves nucleolytic cleavage mediated by the MUS81-EME2 endonuclease. By acting upon the stalled fork, MUS81-EME2 generates a DNA double-strand break (DSB) that can be repaired by homologous recombination, leading to the restoration of an active fork. MUS81-EME2 could also function in telomere maintenance. The chain is Structure-specific endonuclease subunit EME2 from Mus musculus (Mouse).